Reading from the N-terminus, the 476-residue chain is Siroheme synthase (476 aa).

Residues 1 to 204 (MDYFPVFLNI…GKDQAAQDYL (204 aa)) form a precorrin-2 dehydrogenase /sirohydrochlorin ferrochelatase region. NAD(+) contacts are provided by residues 22-23 (SV) and 43-44 (PT). Ser-129 bears the Phosphoserine mark. Positions 218–476 (GEVYLVGAGP…GNTPGYSKHP (259 aa)) are uroporphyrinogen-III C-methyltransferase. Pro-227 serves as a coordination point for S-adenosyl-L-methionine. Catalysis depends on Asp-250, which acts as the Proton acceptor. Residue Lys-272 is the Proton donor of the active site. Residues 303–305 (GGD), Ile-308, 333–334 (TA), Met-385, and Gly-414 each bind S-adenosyl-L-methionine.

It in the N-terminal section; belongs to the precorrin-2 dehydrogenase / sirohydrochlorin ferrochelatase family. The protein in the C-terminal section; belongs to the precorrin methyltransferase family.

It catalyses the reaction uroporphyrinogen III + 2 S-adenosyl-L-methionine = precorrin-2 + 2 S-adenosyl-L-homocysteine + H(+). It carries out the reaction precorrin-2 + NAD(+) = sirohydrochlorin + NADH + 2 H(+). The enzyme catalyses siroheme + 2 H(+) = sirohydrochlorin + Fe(2+). It participates in cofactor biosynthesis; adenosylcobalamin biosynthesis; precorrin-2 from uroporphyrinogen III: step 1/1. The protein operates within cofactor biosynthesis; adenosylcobalamin biosynthesis; sirohydrochlorin from precorrin-2: step 1/1. It functions in the pathway porphyrin-containing compound metabolism; siroheme biosynthesis; precorrin-2 from uroporphyrinogen III: step 1/1. Its pathway is porphyrin-containing compound metabolism; siroheme biosynthesis; siroheme from sirohydrochlorin: step 1/1. It participates in porphyrin-containing compound metabolism; siroheme biosynthesis; sirohydrochlorin from precorrin-2: step 1/1. Functionally, multifunctional enzyme that catalyzes the SAM-dependent methylations of uroporphyrinogen III at position C-2 and C-7 to form precorrin-2 via precorrin-1. Then it catalyzes the NAD-dependent ring dehydrogenation of precorrin-2 to yield sirohydrochlorin. Finally, it catalyzes the ferrochelation of sirohydrochlorin to yield siroheme. This Nitrosomonas eutropha (strain DSM 101675 / C91 / Nm57) protein is Siroheme synthase.